A 254-amino-acid chain; its full sequence is uncharacterized protein (254 aa).

2 residues coordinate NADP(+): V7 and N85. S136 functions as the Proton donor in the catalytic mechanism. Residues Y150, K154, V181, and T183 each coordinate NADP(+). The Proton acceptor role is filled by Y150. Residue K154 is the Lowers pKa of active site Tyr of the active site.

The protein belongs to the short-chain dehydrogenases/reductases (SDR) family.

This is an uncharacterized protein from Saccharomyces cerevisiae (strain ATCC 204508 / S288c) (Baker's yeast).